The primary structure comprises 335 residues: MARWRRIVALGGGAWGTALANLAARAGAEDVALWTRDAAHVAEMTATGVNARRLPGIPLHSALRPTTDLGVVAEADLILAVVPSQSLRGVLEQIQSTLPTPTPLILCCKGIEHETGLFMSEVAADVLGDQPVAVLSGPSFAEDVARGKPTAVTLAAYDGALAAALVEALAAPWFRLYHTHDVRGVEIGGAAKNVLAIANGIAAGRDLGASAGAALIARGFAELCRFGRAFGVEMGTLAGLSGLGDLVLTCGSAQSRNYSFGHALGRGTSINDARANIGLVEGFFTCGILNDLARAKGVDMPIAQAVEAVLAERMGVDEAIATLLARPSKAELAGF.

Residues tryptophan 15, arginine 36, and lysine 109 each contribute to the NADPH site. Sn-glycerol 3-phosphate contacts are provided by lysine 109, glycine 137, and serine 139. Alanine 141 contacts NADPH. Residues lysine 192, aspartate 245, serine 255, arginine 256, and asparagine 257 each contribute to the sn-glycerol 3-phosphate site. The active-site Proton acceptor is the lysine 192. Arginine 256 contributes to the NADPH binding site. Leucine 279 and glutamate 281 together coordinate NADPH.

Belongs to the NAD-dependent glycerol-3-phosphate dehydrogenase family.

The protein localises to the cytoplasm. The catalysed reaction is sn-glycerol 3-phosphate + NAD(+) = dihydroxyacetone phosphate + NADH + H(+). It catalyses the reaction sn-glycerol 3-phosphate + NADP(+) = dihydroxyacetone phosphate + NADPH + H(+). It participates in membrane lipid metabolism; glycerophospholipid metabolism. Catalyzes the reduction of the glycolytic intermediate dihydroxyacetone phosphate (DHAP) to sn-glycerol 3-phosphate (G3P), the key precursor for phospholipid synthesis. The chain is Glycerol-3-phosphate dehydrogenase [NAD(P)+] from Beijerinckia indica subsp. indica (strain ATCC 9039 / DSM 1715 / NCIMB 8712).